The following is a 413-amino-acid chain: Gamma-glutamyl phosphate reductase (413 aa).

It belongs to the gamma-glutamyl phosphate reductase family.

It is found in the cytoplasm. The enzyme catalyses L-glutamate 5-semialdehyde + phosphate + NADP(+) = L-glutamyl 5-phosphate + NADPH + H(+). Its pathway is amino-acid biosynthesis; L-proline biosynthesis; L-glutamate 5-semialdehyde from L-glutamate: step 2/2. Catalyzes the NADPH-dependent reduction of L-glutamate 5-phosphate into L-glutamate 5-semialdehyde and phosphate. The product spontaneously undergoes cyclization to form 1-pyrroline-5-carboxylate. This Geobacillus sp. (strain WCH70) protein is Gamma-glutamyl phosphate reductase.